The primary structure comprises 131 residues: Profilin-8 (131 aa).

Cysteine 13 and cysteine 115 are joined by a disulfide. The short motif at 81-97 (AVIRGKKGAGGITIKKT) is the Involved in PIP2 interaction element. At threonine 111 the chain carries Phosphothreonine.

This sequence belongs to the profilin family. As to quaternary structure, occurs in many kinds of cells as a complex with monomeric actin in a 1:1 ratio. Phosphorylated by MAP kinases.

Its subcellular location is the cytoplasm. The protein localises to the cytoskeleton. Binds to actin and affects the structure of the cytoskeleton. At high concentrations, profilin prevents the polymerization of actin, whereas it enhances it at low concentrations. The sequence is that of Profilin-8 from Olea europaea (Common olive).